The sequence spans 922 residues: Isoleucine--tRNA ligase (922 aa).

The short motif at 57-67 is the 'HIGH' region element; that stretch reads PYANGDIHMGH. L-isoleucyl-5'-AMP is bound at residue Glu-553. A 'KMSKS' region motif is present at residues 594–598; sequence KMSKS. Position 597 (Lys-597) interacts with ATP. 4 residues coordinate Zn(2+): Cys-889, Cys-892, Cys-909, and Cys-912.

This sequence belongs to the class-I aminoacyl-tRNA synthetase family. IleS type 1 subfamily. As to quaternary structure, monomer. Zn(2+) serves as cofactor.

The protein localises to the cytoplasm. It carries out the reaction tRNA(Ile) + L-isoleucine + ATP = L-isoleucyl-tRNA(Ile) + AMP + diphosphate. Its function is as follows. Catalyzes the attachment of isoleucine to tRNA(Ile). As IleRS can inadvertently accommodate and process structurally similar amino acids such as valine, to avoid such errors it has two additional distinct tRNA(Ile)-dependent editing activities. One activity is designated as 'pretransfer' editing and involves the hydrolysis of activated Val-AMP. The other activity is designated 'posttransfer' editing and involves deacylation of mischarged Val-tRNA(Ile). This chain is Isoleucine--tRNA ligase, found in Bacillus licheniformis (strain ATCC 14580 / DSM 13 / JCM 2505 / CCUG 7422 / NBRC 12200 / NCIMB 9375 / NCTC 10341 / NRRL NRS-1264 / Gibson 46).